A 358-amino-acid polypeptide reads, in one-letter code: Mitogen-activated protein kinase hog-1 (358 aa).

Positions 20 to 299 (YSDLQPVGMG…ATEALSHEYL (280 aa)) constitute a Protein kinase domain. Residues 26–34 (VGMGAFGLV) and Lys49 each bind ATP. Asp141 serves as the catalytic Proton acceptor. The residue at position 171 (Thr171) is a Phosphothreonine. A TXY motif is present at residues 171-173 (TGY). Tyr173 carries the post-translational modification Phosphotyrosine.

It belongs to the protein kinase superfamily. Ser/Thr protein kinase family. MAP kinase subfamily. HOG1 sub-subfamily. The cofactor is Mg(2+). Post-translationally, dually phosphorylated on Thr-171 and Tyr-173, which activates the enzyme. Phosphorylation is induced by fungicides and osmotic stress.

It is found in the cytoplasm. It localises to the nucleus. The enzyme catalyses L-seryl-[protein] + ATP = O-phospho-L-seryl-[protein] + ADP + H(+). It catalyses the reaction L-threonyl-[protein] + ATP = O-phospho-L-threonyl-[protein] + ADP + H(+). Activated by tyrosine and threonine phosphorylation. Functionally, proline-directed serine/threonine-protein kinase involved in a signal transduction pathway that is activated by changes in the osmolarity of the extracellular environment. Controls osmotic regulation of transcription of target genes. Involved in ion flux-mediated turgor regulation. The polypeptide is Mitogen-activated protein kinase hog-1 (hog-1) (Neurospora crassa (strain ATCC 24698 / 74-OR23-1A / CBS 708.71 / DSM 1257 / FGSC 987)).